The primary structure comprises 694 residues: Threonine--tRNA ligase (694 aa).

The 67-residue stretch at 8–74 (NFVNTSVTTH…EETATFTAVP (67 aa)) folds into the TGS domain. Residues 273 to 579 (DHRRLGTELD…LLEHYAGAFP (307 aa)) are catalytic. Zn(2+) contacts are provided by C378, H429, and H556.

It belongs to the class-II aminoacyl-tRNA synthetase family. As to quaternary structure, homodimer. It depends on Zn(2+) as a cofactor.

It is found in the cytoplasm. It catalyses the reaction tRNA(Thr) + L-threonine + ATP = L-threonyl-tRNA(Thr) + AMP + diphosphate + H(+). Functionally, catalyzes the attachment of threonine to tRNA(Thr) in a two-step reaction: L-threonine is first activated by ATP to form Thr-AMP and then transferred to the acceptor end of tRNA(Thr). Also edits incorrectly charged L-seryl-tRNA(Thr). This is Threonine--tRNA ligase from Corynebacterium efficiens (strain DSM 44549 / YS-314 / AJ 12310 / JCM 11189 / NBRC 100395).